Reading from the N-terminus, the 151-residue chain is Transcriptional repressor NrdR (151 aa).

A disordered region spans residues M1–S24. A zinc finger spans residues C3–C34. Residues L14–S24 show a composition bias toward basic and acidic residues. An ATP-cone domain is found at L49–V139.

This sequence belongs to the NrdR family. Requires Zn(2+) as cofactor.

Functionally, negatively regulates transcription of bacterial ribonucleotide reductase nrd genes and operons by binding to NrdR-boxes. The chain is Transcriptional repressor NrdR from Shouchella clausii (strain KSM-K16) (Alkalihalobacillus clausii).